The primary structure comprises 692 residues: MNNPAQLRQDTEKEVLALLGSLVLPAGTALAATGSLARSELTPYSDLDLILIHPPGATPDGVEDLWYPIWDAKKRLDYSVRTPDECVAMISADSTAALAMLDLRFVAGDEDLCAKTRRRIVEKWRQELNKNFDAVVDTAIARWRRSGPVVAMTRPDLKHGRGGLRDFELIKALALGHLCNLPQLDAQHQLLLDARTLLHVHARRSRDVLDPEFAVDVAMDLGFVDRYHLGREIADAARAIDDGLTTALATARGILPRRTGFAFRNASRRPLDLDVVDANGTIELSKKPDLNDPALPLRVAAAAATTGLPVAESTWVRLNECPPLPEPWPANAAGDFFRILSSPKNSRRVVKNMDRHGLWSRFVPEWDRIKGLMPREPSHISTIDEHSLNTVAGCALETVTVARPDLLVLGALYHDIGKGFPRPHEQVGAEMVARAASRMGLNLRDRASVQTLVAEHTAVAKIAARLDPSSEGAVDKLLDAVRYDLVTLNLLEVLTEADAKATGPGVWTARLEHALRIVCKRARDRLTDIRPVAPMIAPRSEIGLVERDGVFTVQWHGEDLHRILGVIYAKGWTITAARMLANGQWSAEFDVRANGPQDFDPQHFLQAYQSGVFSEVPIPALGITATFWHGNTLEVRTELRTGAIFALLRTLPDALWINAVTRGATLIIQAALKPGFDRATVERSVVRSLAGS.

Residues 1–270 (MNNPAQLRQD…FAFRNASRRP (270 aa)) form a uridylyltransferase region. A uridylyl-removing region spans residues 271-692 (LDLDVVDANG…RSVVRSLAGS (422 aa)). Positions 383–484 (IDEHSLNTVA…DKLLDAVRYD (102 aa)) constitute an HD domain.

The protein belongs to the GlnD family. It depends on Mg(2+) as a cofactor.

It catalyses the reaction [protein-PII]-L-tyrosine + UTP = [protein-PII]-uridylyl-L-tyrosine + diphosphate. The enzyme catalyses [protein-PII]-uridylyl-L-tyrosine + H2O = [protein-PII]-L-tyrosine + UMP + H(+). Uridylyltransferase (UTase) activity is inhibited by glutamine, while glutamine activates uridylyl-removing (UR) activity. Modifies, by uridylylation and deuridylylation, the PII regulatory proteins (GlnB and homologs), in response to the nitrogen status of the cell that GlnD senses through the glutamine level. Under low glutamine levels, catalyzes the conversion of the PII proteins and UTP to PII-UMP and PPi, while under higher glutamine levels, GlnD hydrolyzes PII-UMP to PII and UMP (deuridylylation). Thus, controls uridylylation state and activity of the PII proteins, and plays an important role in the regulation of nitrogen assimilation and metabolism. The chain is Bifunctional uridylyltransferase/uridylyl-removing enzyme (glnD) from Corynebacterium glutamicum (strain ATCC 13032 / DSM 20300 / JCM 1318 / BCRC 11384 / CCUG 27702 / LMG 3730 / NBRC 12168 / NCIMB 10025 / NRRL B-2784 / 534).